Reading from the N-terminus, the 229-residue chain is Synaptogyrin-3 (229 aa).

Met-1 is subject to N-acetylmethionine. Residues 20-172 (FARRPQTLLR…LTVKALQRFR (153 aa)) form the MARVEL domain. 4 helical membrane-spanning segments follow: residues 30–50 (VASW…GYVN), 70–90 (FGVA…LLDV), 105–125 (VLLD…GFCF), and 148–168 (AVIT…VKAL).

This sequence belongs to the synaptogyrin family. In terms of assembly, interacts (via N-terminus) with SLC6A3 (via N-terminus). May interact with VMAT2.

The protein resides in the cytoplasmic vesicle. Its subcellular location is the secretory vesicle. The protein localises to the synaptic vesicle membrane. It is found in the synapse. Functionally, may play a role in regulated exocytosis. May indirectly regulate the activity of the plasma membrane dopamine transporter SLC6A3 and thereby regulate dopamine transport back from the synaptic cleft into the presynaptic terminal. The polypeptide is Synaptogyrin-3 (Bos taurus (Bovine)).